Reading from the N-terminus, the 217-residue chain is tRNA (guanine-N(7)-)-methyltransferase (217 aa).

Positions 44, 69, 96, and 118 each coordinate S-adenosyl-L-methionine. Asp118 is a catalytic residue. Lys122 serves as a coordination point for substrate. An interaction with RNA region spans residues 124–129; the sequence is RHEKRR. Substrate is bound by residues Asp154 and 193–196; that span reads TEYE.

Belongs to the class I-like SAM-binding methyltransferase superfamily. TrmB family.

It catalyses the reaction guanosine(46) in tRNA + S-adenosyl-L-methionine = N(7)-methylguanosine(46) in tRNA + S-adenosyl-L-homocysteine. It functions in the pathway tRNA modification; N(7)-methylguanine-tRNA biosynthesis. Its function is as follows. Catalyzes the formation of N(7)-methylguanine at position 46 (m7G46) in tRNA. This chain is tRNA (guanine-N(7)-)-methyltransferase, found in Lactococcus lactis subsp. lactis (strain IL1403) (Streptococcus lactis).